The sequence spans 237 residues: Orotidine 5'-phosphate decarboxylase (237 aa).

Substrate is bound by residues Asp-17, Lys-39, 66-75, Thr-121, Arg-182, Gln-191, Gly-211, and Arg-212; that span reads DLKLHDIGNT. Lys-68 functions as the Proton donor in the catalytic mechanism.

Belongs to the OMP decarboxylase family. Type 1 subfamily. As to quaternary structure, homodimer.

It catalyses the reaction orotidine 5'-phosphate + H(+) = UMP + CO2. It functions in the pathway pyrimidine metabolism; UMP biosynthesis via de novo pathway; UMP from orotate: step 2/2. In terms of biological role, catalyzes the decarboxylation of orotidine 5'-monophosphate (OMP) to uridine 5'-monophosphate (UMP). In Rhodopseudomonas palustris (strain ATCC BAA-98 / CGA009), this protein is Orotidine 5'-phosphate decarboxylase.